Here is a 197-residue protein sequence, read N- to C-terminus: MYB-like transcription factor EOBII (197 aa).

2 HTH myb-type domains span residues 10–62 (DAEV…LNYL) and 63–117 (RPDV…QKHI). 2 DNA-binding regions (H-T-H motif) span residues 38 to 62 (WNSLAKSAGLKRTGKSCRLRWLNYL) and 90 to 113 (WSKIAKHLPGRTDNEIKNYWRTRI). A disordered region spans residues 125-158 (GQAASSEQNDHQEACTSQMSNGPNDNTIDQTYSP). Residues 138-158 (ACTSQMSNGPNDNTIDQTYSP) show a composition bias toward polar residues.

As to expression, specifically expressed in flowers, mostly in stigmas, petal tubes and petal limbs, and, to a lower extent, in anthers and stamen. Also present at low levels in roots, stems, leaves and sepals.

It localises to the nucleus. MYB-type transcription factor controlling the production of volatile organic compounds (VOCs), including floral volatile benzenoids and phenylpropanoids (FVBP), in flowers of fragrant cultivars (e.g. cv. Mitchell and cv. V26) by regulating the expression of ODO1 and EOBI, key regulators of the shikimate pathway, and of several biosynthetic floral scent-related genes including IGS, PAL2 and CFAT. This scent, mostly produced in the evening and night by the petals, attracts the pollinators (e.g. the night-active hawkmoth pollinator Manduca sexta). Binds to and activates the ODO1 and EOBI promoters via MYB binding sites (MBS) 5'-AAACCTAAT-3' and 5'-CTAACT-3'. Regulates the promoters of IGS1, CFAT and PAL2. Controls flowers petal opening by modulating a global transcriptomic switch. The protein is MYB-like transcription factor EOBII of Petunia hybrida (Petunia).